Here is a 435-residue protein sequence, read N- to C-terminus: GTPase Obg (435 aa).

In terms of domain architecture, Obg spans M1 to L158. Positions A159–R328 constitute an OBG-type G domain. Residues G165–S172, F190–T194, D211–G214, N280–D283, and S309–K311 contribute to the GTP site. The Mg(2+) site is built by S172 and T192. Positions I343–A426 constitute an OCT domain.

Belongs to the TRAFAC class OBG-HflX-like GTPase superfamily. OBG GTPase family. Monomer. Requires Mg(2+) as cofactor.

It localises to the cytoplasm. In terms of biological role, an essential GTPase which binds GTP, GDP and possibly (p)ppGpp with moderate affinity, with high nucleotide exchange rates and a fairly low GTP hydrolysis rate. Plays a role in control of the cell cycle, stress response, ribosome biogenesis and in those bacteria that undergo differentiation, in morphogenesis control. The protein is GTPase Obg of Dictyoglomus thermophilum (strain ATCC 35947 / DSM 3960 / H-6-12).